We begin with the raw amino-acid sequence, 252 residues long: LexA repressor (252 aa).

A disordered region spans residues 1–46 (MPEENRGGHQPYTEESSVSALHPVRTDDSVGSSAEQTGDAPTLTER). A DNA-binding region (H-T-H motif) is located at residues 67–87 (IREIGEAVGLSSPSSVAHQLK). Residues serine 176 and lysine 213 each act as for autocatalytic cleavage activity in the active site.

This sequence belongs to the peptidase S24 family. As to quaternary structure, homodimer.

The catalysed reaction is Hydrolysis of Ala-|-Gly bond in repressor LexA.. In terms of biological role, represses a number of genes involved in the response to DNA damage (SOS response), including recA and lexA. In the presence of single-stranded DNA, RecA interacts with LexA causing an autocatalytic cleavage which disrupts the DNA-binding part of LexA, leading to derepression of the SOS regulon and eventually DNA repair. This Thermobifida fusca (strain YX) protein is LexA repressor.